Reading from the N-terminus, the 344-residue chain is Phenylalanine--tRNA ligase alpha subunit (344 aa).

Glutamate 256 is a Mg(2+) binding site.

Belongs to the class-II aminoacyl-tRNA synthetase family. Phe-tRNA synthetase alpha subunit type 1 subfamily. In terms of assembly, tetramer of two alpha and two beta subunits. The cofactor is Mg(2+).

Its subcellular location is the cytoplasm. The catalysed reaction is tRNA(Phe) + L-phenylalanine + ATP = L-phenylalanyl-tRNA(Phe) + AMP + diphosphate + H(+). The chain is Phenylalanine--tRNA ligase alpha subunit from Bacillus anthracis (strain CDC 684 / NRRL 3495).